Reading from the N-terminus, the 319-residue chain is Cytochrome c biogenesis protein CcsA (319 aa).

8 consecutive transmembrane segments (helical) span residues Ile-9–Leu-29, Thr-48–Leu-68, Leu-71–Phe-91, Leu-98–Leu-118, Met-143–Ile-163, Ile-225–Asn-245, Glu-258–Arg-275, and Ala-286–Leu-306.

The protein belongs to the CcmF/CycK/Ccl1/NrfE/CcsA family. In terms of assembly, may interact with Ccs1.

Its subcellular location is the plastid. The protein localises to the chloroplast thylakoid membrane. Functionally, required during biogenesis of c-type cytochromes (cytochrome c6 and cytochrome f) at the step of heme attachment. This is Cytochrome c biogenesis protein CcsA from Eucalyptus globulus subsp. globulus (Tasmanian blue gum).